Reading from the N-terminus, the 287-residue chain is Glutamate racemase (287 aa).

Residues 32-33 (DS) and 64-65 (YG) each bind substrate. C96 functions as the Proton donor/acceptor in the catalytic mechanism. 97-98 (NT) contributes to the substrate binding site. C208 functions as the Proton donor/acceptor in the catalytic mechanism. A substrate-binding site is contributed by 209–210 (TH).

It belongs to the aspartate/glutamate racemases family.

It carries out the reaction L-glutamate = D-glutamate. Its pathway is cell wall biogenesis; peptidoglycan biosynthesis. Functionally, provides the (R)-glutamate required for cell wall biosynthesis. This Yersinia enterocolitica serotype O:8 / biotype 1B (strain NCTC 13174 / 8081) protein is Glutamate racemase.